The primary structure comprises 435 residues: Increased rDNA silencing protein 4 (435 aa).

Disordered stretches follow at residues 1–20, 39–71, 136–204, and 233–277; these read MKIPVTADAESASKDGLQHD, ASIPLEKASFSRQAPSQNPSITAKPPIPPQRAA, ASKA…NHTL, and GSKR…PDEI. Residues 11 to 20 are compositionally biased toward basic and acidic residues; that stretch reads SASKDGLQHD. Positions 48–59 are enriched in polar residues; that stretch reads FSRQAPSQNPSI. Composition is skewed to low complexity over residues 174 to 186 and 249 to 265; these read SSQLSTESELLQL and QRGSPSQPLLQLSSDSS. The region spanning 327–435 is the EH domain; that stretch reads ERKRYEEVWE…VPKSVWKSVQ (109 aa).

It belongs to the IRS4 family.

In terms of biological role, positive regulator of phosphatidylinositol 4,5-bisphosphate turnover and negatively regulates signaling through the cell integrity pathway. Involved in rDNA silencing. In Coccidioides immitis (strain RS) (Valley fever fungus), this protein is Increased rDNA silencing protein 4 (IRS4).